Reading from the N-terminus, the 317-residue chain is Cytochrome f (317 aa).

An N-terminal signal peptide occupies residues 1–34 (MINFKKQIMKKTTFFLCAMLLVSSILIAPRSSLA). Residues Tyr-35, Cys-55, Cys-58, and His-59 each contribute to the heme site. A helical membrane pass occupies residues 284–304 (IIGLIAFFIGVGLTQILLVLK).

This sequence belongs to the cytochrome f family. In terms of assembly, the 4 large subunits of the cytochrome b6-f complex are cytochrome b6, subunit IV (17 kDa polypeptide, PetD), cytochrome f and the Rieske protein, while the 4 small subunits are PetG, PetL, PetM and PetN. The complex functions as a dimer. The cofactor is heme.

The protein localises to the cellular thylakoid membrane. In terms of biological role, component of the cytochrome b6-f complex, which mediates electron transfer between photosystem II (PSII) and photosystem I (PSI), cyclic electron flow around PSI, and state transitions. In Prochlorococcus marinus (strain MIT 9515), this protein is Cytochrome f.